We begin with the raw amino-acid sequence, 347 residues long: NADH-ubiquinone oxidoreductase chain 2 (347 aa).

9 helical membrane-spanning segments follow: residues 3–23, 59–79, 93–115, 150–170, 178–198, 199–219, 242–262, 274–294, and 326–346; these read PLAL…TMMS, YFMT…INLM, VASN…HFWV, NTNL…WGGL, ILAY…PFNP, TLTL…FMIL, IMLM…GFMP, NSII…YFYM, and LPTL…ISML.

This sequence belongs to the complex I subunit 2 family. As to quaternary structure, core subunit of respiratory chain NADH dehydrogenase (Complex I) which is composed of 45 different subunits. Interacts with TMEM242.

It is found in the mitochondrion inner membrane. The catalysed reaction is a ubiquinone + NADH + 5 H(+)(in) = a ubiquinol + NAD(+) + 4 H(+)(out). Functionally, core subunit of the mitochondrial membrane respiratory chain NADH dehydrogenase (Complex I) which catalyzes electron transfer from NADH through the respiratory chain, using ubiquinone as an electron acceptor. Essential for the catalytic activity and assembly of complex I. The protein is NADH-ubiquinone oxidoreductase chain 2 of Loxodonta africana (African elephant).